Consider the following 137-residue polypeptide: Basic phospholipase A2 beta-bungarotoxin A-AL4 chain (137 aa).

The signal sequence occupies residues 1–10 (LAVCVSLLGA). The propeptide occupies 11–18 (ANIPPQHL). Disulfide bonds link Cys45–Cys137, Cys47–Cys63, Cys62–Cys118, Cys69–Cys111, Cys79–Cys104, and Cys97–Cys109. 3 residues coordinate Ca(2+): Tyr46, Gly48, and Gly50. The active site involves His66. Asp67 contributes to the Ca(2+) binding site. Asp112 is a catalytic residue.

This sequence belongs to the phospholipase A2 family. Group I subfamily. D49 sub-subfamily. In terms of assembly, heterodimer; disulfide-linked. The A chains have phospholipase A2 activity and the B chains show homology with the basic protease inhibitors. Ca(2+) serves as cofactor. In terms of tissue distribution, expressed by the venom gland.

Its subcellular location is the secreted. It carries out the reaction a 1,2-diacyl-sn-glycero-3-phosphocholine + H2O = a 1-acyl-sn-glycero-3-phosphocholine + a fatty acid + H(+). Snake venom phospholipase A2 (PLA2) that inhibits neuromuscular transmission by blocking acetylcholine release from the nerve termini. PLA2 catalyzes the calcium-dependent hydrolysis of the 2-acyl groups in 3-sn-phosphoglycerides. In Bungarus multicinctus (Many-banded krait), this protein is Basic phospholipase A2 beta-bungarotoxin A-AL4 chain.